The primary structure comprises 148 residues: CDC25-like phosphatase YCH1 (148 aa).

The residue at position 1 (Met-1) is an N-acetylmethionine. Positions 29–137 (LREPFQVVDV…WQSVYGDDES (109 aa)) constitute a Rhodanese domain.

The protein belongs to the MPI phosphatase family.

The protein resides in the cytoplasm. Its subcellular location is the nucleus. In terms of biological role, protein phosphatase. This chain is CDC25-like phosphatase YCH1 (YCH1), found in Saccharomyces cerevisiae (strain ATCC 204508 / S288c) (Baker's yeast).